Here is a 598-residue protein sequence, read N- to C-terminus: Nuclear receptor subfamily 4 group A member 2 (598 aa).

A disordered region spans residues M1–Y22. A compositionally biased stretch (low complexity) spans Y8–Y22. The segment at residues E260–T335 is a DNA-binding region (nuclear receptor). NR C4-type zinc fingers lie at residues C263–C283 and C299–C323. Residues F287 to R314 carry the Bipartite nuclear localization signal (NLS1) motif. Residues S337–P361 form a disordered region. The Nuclear localization signal (NLS1) motif lies at L338 to K350. Residues P352–P361 show a composition bias toward pro residues. An NR LBD domain is found at P360 to T595. The nuclear export sequence (NES1) signature appears at F443 to A452. The short motif at Q568–K577 is the nuclear export sequence (NES2) element.

It belongs to the nuclear hormone receptor family. NR4 subfamily. As to quaternary structure, interacts with SFPQ, NCOR2, SIN3A and HADC1. The interaction with NCOR2 increases in the absence of PITX3. Interacts with PER2. As to expression, expressed in a number of cell lines of T-cell, B-cell and fibroblast origin. Strong expression in brain tissue.

The protein localises to the cytoplasm. It localises to the nucleus. Transcriptional regulator which is important for the differentiation and maintenance of meso-diencephalic dopaminergic (mdDA) neurons during development. It is crucial for expression of a set of genes such as SLC6A3, SLC18A2, TH and DRD2 which are essential for development of mdDA neurons. This is Nuclear receptor subfamily 4 group A member 2 (NR4A2) from Homo sapiens (Human).